Here is a 115-residue protein sequence, read N- to C-terminus: Large ribosomal subunit protein P2 (115 aa).

N-acetylmethionine is present on Met-1. 2 positions are modified to phosphoserine: Ser-17 and Ser-19. Position 21 is an N6-acetyllysine; alternate (Lys-21). Position 21 is an N6-succinyllysine; alternate (Lys-21). Residues Gly-78–Ala-90 show a composition bias toward low complexity. Positions Gly-78–Asp-115 are disordered. Ser-79 and Ser-86 each carry phosphoserine. Positions Ala-91–Glu-101 are enriched in basic and acidic residues. Phosphoserine is present on residues Ser-102 and Ser-105.

This sequence belongs to the eukaryotic ribosomal protein P1/P2 family. In terms of assembly, heterodimer with P1 at the lateral ribosomal stalk of the large ribosomal subunit.

Functionally, plays an important role in the elongation step of protein synthesis. This is Large ribosomal subunit protein P2 (RPLP2) from Homo sapiens (Human).